Consider the following 85-residue polypeptide: RNA-binding protein Hfq (85 aa).

Residues 10-70 enclose the Sm domain; it reads DAFLNQVRKE…ISTIIPQRPV (61 aa).

The protein belongs to the Hfq family. In terms of assembly, homohexamer.

Its function is as follows. RNA chaperone that binds small regulatory RNA (sRNAs) and mRNAs to facilitate mRNA translational regulation in response to envelope stress, environmental stress and changes in metabolite concentrations. Also binds with high specificity to tRNAs. The polypeptide is RNA-binding protein Hfq (Carboxydothermus hydrogenoformans (strain ATCC BAA-161 / DSM 6008 / Z-2901)).